Reading from the N-terminus, the 187-residue chain is Calcium and integrin-binding family member 3 (187 aa).

3 consecutive EF-hand domains span residues 66–101 (KDNP…MSEM), 103–138 (PRDL…LTRG), and 144–179 (EVSL…APDF). Residues aspartate 116, asparagine 118, aspartate 120, tyrosine 122, aspartate 127, aspartate 157, aspartate 159, aspartate 161, arginine 163, and aspartate 168 each contribute to the Ca(2+) site.

In terms of assembly, monomer and homodimer. Interacts with ITGA2B (via C-terminus cytoplasmic tail region); the interaction is stabilized/increased in a calcium and magnesium-dependent manner. Interacts with TMC1.

In terms of biological role, acts a an auxiliary subunit of the sensory mechanoelectrical transduction (MET) channel in hair cells. Plays a role in regulating hair cell MET channel localization and function. This Homo sapiens (Human) protein is Calcium and integrin-binding family member 3 (CIB3).